The chain runs to 154 residues: Ribonuclease HI (154 aa).

One can recognise an RNase H type-1 domain in the interval 1–142 (MPKQIEIFTD…CDELAKKGAE (142 aa)). The Mg(2+) site is built by D10, E48, D70, and D134.

It belongs to the RNase H family. As to quaternary structure, monomer. Requires Mg(2+) as cofactor.

It is found in the cytoplasm. The enzyme catalyses Endonucleolytic cleavage to 5'-phosphomonoester.. Endonuclease that specifically degrades the RNA of RNA-DNA hybrids. The sequence is that of Ribonuclease HI (rnhA) from Haemophilus influenzae (strain ATCC 51907 / DSM 11121 / KW20 / Rd).